A 31-amino-acid chain; its full sequence is Conotoxin pc6b (31 aa).

Intrachain disulfides connect Cys-2–Cys-20, Cys-9–Cys-25, and Cys-19–Cys-29.

Belongs to the conotoxin O1 superfamily. As to expression, expressed by the venom duct.

The protein resides in the secreted. In Conus pictus (Cone snail), this protein is Conotoxin pc6b.